The primary structure comprises 166 residues: Large ribosomal subunit protein uL10 (166 aa).

Belongs to the universal ribosomal protein uL10 family. Part of the ribosomal stalk of the 50S ribosomal subunit. The N-terminus interacts with L11 and the large rRNA to form the base of the stalk. The C-terminus forms an elongated spine to which L12 dimers bind in a sequential fashion forming a multimeric L10(L12)X complex.

Its function is as follows. Forms part of the ribosomal stalk, playing a central role in the interaction of the ribosome with GTP-bound translation factors. In Aeromonas salmonicida (strain A449), this protein is Large ribosomal subunit protein uL10.